The sequence spans 397 residues: 2,3,4,5-tetrahydropyridine-2,6-dicarboxylate N-succinyltransferase (397 aa).

Glutamate 265 (acyl-anhydride intermediate) is an active-site residue. Succinyl-CoA is bound by residues arginine 267, glycine 282, serine 285, alanine 308, 323-324, glycine 331, lysine 360, and 373-376; these read DA and RQNS.

The protein belongs to the type 2 tetrahydrodipicolinate N-succinyltransferase family. As to quaternary structure, homotrimer.

The protein localises to the cytoplasm. The catalysed reaction is (S)-2,3,4,5-tetrahydrodipicolinate + succinyl-CoA + H2O = (S)-2-succinylamino-6-oxoheptanedioate + CoA. The protein operates within amino-acid biosynthesis; L-lysine biosynthesis via DAP pathway; LL-2,6-diaminopimelate from (S)-tetrahydrodipicolinate (succinylase route): step 1/3. Its function is as follows. Catalyzes the conversion of the cyclic tetrahydrodipicolinate (THDP) into the acyclic N-succinyl-L-2-amino-6-oxopimelate using succinyl-CoA. The sequence is that of 2,3,4,5-tetrahydropyridine-2,6-dicarboxylate N-succinyltransferase from Sulfurovum sp. (strain NBC37-1).